A 649-amino-acid chain; its full sequence is Probable potassium transport system protein Kup (649 aa).

The next 12 membrane-spanning stretches (helical) occupy residues M1–M21, I42–A62, G84–L104, I126–F146, T159–L179, V195–L215, I235–A255, V286–A306, L334–F354, Y364–W384, V390–S410, and F414–T434.

Belongs to the HAK/KUP transporter (TC 2.A.72) family.

Its subcellular location is the cell membrane. It catalyses the reaction K(+)(in) + H(+)(in) = K(+)(out) + H(+)(out). Its function is as follows. Transport of potassium into the cell. Likely operates as a K(+):H(+) symporter. This Bifidobacterium adolescentis (strain ATCC 15703 / DSM 20083 / NCTC 11814 / E194a) protein is Probable potassium transport system protein Kup.